The primary structure comprises 194 residues: Ion-translocating oxidoreductase complex subunit B (194 aa).

The interval 1-26 (MSSILIAVIAISALALVFGLILGFAS) is hydrophobic. A 4Fe-4S domain is found at 32-90 (ESDPIVDQIDSILPQTQCGQCGYPGCKPYAEAIANGDTINKCPPGGQATIEKLADLMGV). The [4Fe-4S] cluster site is built by cysteine 49, cysteine 52, cysteine 57, cysteine 73, cysteine 114, cysteine 117, cysteine 120, cysteine 124, cysteine 144, cysteine 147, cysteine 150, and cysteine 154. 4Fe-4S ferredoxin-type domains are found at residues 105 to 134 (KIAF…GGTK) and 135 to 164 (ALHT…MIPV).

Belongs to the 4Fe4S bacterial-type ferredoxin family. RnfB subfamily. The complex is composed of six subunits: RnfA, RnfB, RnfC, RnfD, RnfE and RnfG. [4Fe-4S] cluster is required as a cofactor.

Its subcellular location is the cell inner membrane. Its function is as follows. Part of a membrane-bound complex that couples electron transfer with translocation of ions across the membrane. This chain is Ion-translocating oxidoreductase complex subunit B, found in Aliivibrio salmonicida (strain LFI1238) (Vibrio salmonicida (strain LFI1238)).